A 146-amino-acid polypeptide reads, in one-letter code: Gonadotropin subunit beta-2 (146 aa).

The signal sequence occupies residues 1-22; that stretch reads MTVEISKVFVLMMLNLFLGASS. 6 disulfides stabilise this stretch: Cys37/Cys85, Cys51/Cys100, Cys54/Cys138, Cys62/Cys116, Cys66/Cys118, and Cys121/Cys128. Asn41 carries an N-linked (GlcNAc...) asparagine glycan.

It belongs to the glycoprotein hormones subunit beta family. Heterodimer of an alpha and a beta chain.

The protein localises to the secreted. Its function is as follows. Involved in gametogenesis and steroidogenesis. This Trichopodus trichopterus (Three spot gourami) protein is Gonadotropin subunit beta-2 (cgbb).